Reading from the N-terminus, the 301-residue chain is Glycine--tRNA ligase alpha subunit (301 aa).

It belongs to the class-II aminoacyl-tRNA synthetase family. In terms of assembly, tetramer of two alpha and two beta subunits.

The protein resides in the cytoplasm. The enzyme catalyses tRNA(Gly) + glycine + ATP = glycyl-tRNA(Gly) + AMP + diphosphate. The protein is Glycine--tRNA ligase alpha subunit of Shewanella amazonensis (strain ATCC BAA-1098 / SB2B).